A 198-amino-acid polypeptide reads, in one-letter code: Na(+)-translocating NADH-quinone reductase subunit E (198 aa).

A run of 6 helical transmembrane segments spans residues 11 to 31 (AVFV…FLAV), 35 to 55 (VSTA…AVPI), 77 to 97 (FLNF…LEMI), 110 to 130 (GIFL…SFMV), 140 to 160 (IVYG…MAGI), and 176 to 196 (LGIT…FSGV).

Belongs to the NqrDE/RnfAE family. In terms of assembly, composed of six subunits; NqrA, NqrB, NqrC, NqrD, NqrE and NqrF.

The protein localises to the cell inner membrane. It catalyses the reaction a ubiquinone + n Na(+)(in) + NADH + H(+) = a ubiquinol + n Na(+)(out) + NAD(+). In terms of biological role, NQR complex catalyzes the reduction of ubiquinone-1 to ubiquinol by two successive reactions, coupled with the transport of Na(+) ions from the cytoplasm to the periplasm. NqrA to NqrE are probably involved in the second step, the conversion of ubisemiquinone to ubiquinol. The chain is Na(+)-translocating NADH-quinone reductase subunit E from Klebsiella pneumoniae subsp. pneumoniae (strain ATCC 700721 / MGH 78578).